Reading from the N-terminus, the 93-residue chain is Small ribosomal subunit protein uS19 (93 aa).

The protein belongs to the universal ribosomal protein uS19 family.

In terms of biological role, protein S19 forms a complex with S13 that binds strongly to the 16S ribosomal RNA. This Nitratidesulfovibrio vulgaris (strain ATCC 29579 / DSM 644 / CCUG 34227 / NCIMB 8303 / VKM B-1760 / Hildenborough) (Desulfovibrio vulgaris) protein is Small ribosomal subunit protein uS19.